Here is a 360-residue protein sequence, read N- to C-terminus: UPF0324 membrane protein plu2856 (360 aa).

9 helical membrane passes run L20–W42, G47–L69, V104–L126, Q136–A155, V167–Y189, M239–I256, W277–V299, N304–I326, and P333–I355.

It belongs to the UPF0324 family.

It localises to the cell membrane. This chain is UPF0324 membrane protein plu2856, found in Photorhabdus laumondii subsp. laumondii (strain DSM 15139 / CIP 105565 / TT01) (Photorhabdus luminescens subsp. laumondii).